A 365-amino-acid polypeptide reads, in one-letter code: Poly(rC)-binding protein 2 (365 aa).

2 KH domains span residues 13-75 (TLTI…FAMI) and 97-162 (PVTL…VKQI). A Glycyl lysine isopeptide (Lys-Gly) (interchain with G-Cter in SUMO2) cross-link involves residue Lys115. Ser173 is modified (phosphoserine). Lys185 is covalently cross-linked (Glycyl lysine isopeptide (Lys-Gly) (interchain with G-Cter in SUMO2)). A phosphoserine mark is found at Ser189 and Ser272. The region spanning 287 to 351 (TTSHELTIPN…ASISLAQYLI (65 aa)) is the KH 3 domain. A Glycyl lysine isopeptide (Lys-Gly) (interchain with G-Cter in SUMO2) cross-link involves residue Lys322. Phosphoserine is present on residues Ser364 and Ser365.

In terms of assembly, identified in a mRNP complex, at least composed of DHX9, DDX3X, ELAVL1, HNRNPU, IGF2BP1, ILF3, PABPC1, PCBP2, PTBP2, STAU1, STAU2, SYNCRIP and YBX1. Interacts with IFIH1 and RNF135. Interacts with MAVS (via C-terminus) and ITCH (via WW domains). Interacts with CGAS; preventing the formation of liquid-like droplets in which CGAS is activated. Post-translationally, phosphorylated. The non-phosphorylated form(s) exhibited the strongest poly(rC)-binding activity. In terms of processing, (Microbial infection) Proteolytically cleaved by picornavirus proteinase 3CD. Detected in all tissues examined.

It is found in the nucleus. The protein resides in the cytoplasm. Single-stranded nucleic acid binding protein that binds preferentially to oligo dC. Major cellular poly(rC)-binding protein. Also binds poly(rU). Acts as a negative regulator of antiviral signaling. Negatively regulates cellular antiviral responses mediated by MAVS signaling. It acts as an adapter between MAVS and the E3 ubiquitin ligase ITCH, therefore triggering MAVS ubiquitination and degradation. Negativeley regulates the cGAS-STING pathway via interaction with CGAS, preventing the formation of liquid-like droplets in which CGAS is activated. Together with PCBP1, required for erythropoiesis, possibly by regulating mRNA splicing. Its function is as follows. (Microbial infection) In case of infection by poliovirus, binds to the viral internal ribosome entry site (IRES) and stimulates the IRES-mediated translation. Also plays a role in initiation of viral RNA replication in concert with the viral protein 3CD. The polypeptide is Poly(rC)-binding protein 2 (Homo sapiens (Human)).